Here is a 266-residue protein sequence, read N- to C-terminus: Chymotrypsin-like elastase family member 1 (266 aa).

Residues Met1–Ser16 form the signal peptide. The propeptide at Thr17–Arg26 is activation peptide. The Peptidase S1 domain maps to Val27–Ala264. An intrachain disulfide couples Cys56 to Cys72. Catalysis depends on His71, which acts as the Charge relay system. The Ca(2+) site is built by Asp85, Asn87, Gln90, and Glu95. Asp119 (charge relay system) is an active-site residue. Cystine bridges form between Cys153–Cys220, Cys184–Cys200, and Cys210–Cys240. Ser214 (charge relay system) is an active-site residue.

This sequence belongs to the peptidase S1 family. Elastase subfamily. The cofactor is Ca(2+). In terms of tissue distribution, pancreas.

It localises to the secreted. It catalyses the reaction Hydrolysis of proteins, including elastin. Preferential cleavage: Ala-|-Xaa.. Serine proteases that hydrolyze many proteins in addition to elastin. The chain is Chymotrypsin-like elastase family member 1 (Cela1) from Rattus norvegicus (Rat).